We begin with the raw amino-acid sequence, 424 residues long: DNA repair protein Rad60 (424 aa).

Position 26 is a phosphotyrosine (Tyr26). Phosphoserine occurs at positions 32 and 34. The tract at residues 45-177 (LPKKSTKTGK…LTTTTSNSAS (133 aa)) is disordered. Residues 48 to 57 (KSTKTGKRKN) show a composition bias toward basic residues. Residues 77-93 (QAEHKAVEPEEDMRTER) are compositionally biased toward basic and acidic residues. A Phosphoserine modification is found at Ser96. Basic and acidic residues predominate over residues 104–123 (EMEKKNGQQSDVEKHAKEND). Residues 156–166 (KPKKRGQKKRT) show a composition bias toward basic residues. Residues 167–177 (SLTTTTSNSAS) are compositionally biased toward low complexity.

Forms a complex with dgrn; likely required for localization to the nuclear periphery. Interacts with the SMC5-SMC6 complex members SMC5 and SMC6/jnj following ionizing radiation (IR) to induce DNA damage. Interaction between the SMC5-SMC6 complex and the dgrn-Rad60 complex, may stabilize the association of heterochromatic DSBs with the nuclear periphery.

The protein localises to the nucleus. It is found in the nucleoplasm. Functionally, required for repair of DNA double strand breaks which occur during replication or are induced by ionizing radiation (IR). Functions with dgrn and downstream of the SMC5-SMC6 complex to regulate strand break repair. Likely functions by stabilizing the association of heterochromatic double strand breaks (DSBs) with the nuclear periphery as part of the homologous recombination (HR) repair process. The chain is DNA repair protein Rad60 from Drosophila melanogaster (Fruit fly).